The sequence spans 361 residues: MAGCRDPRVVDTLHLLLLVAVLPLAVSGVRRGAVDWTQEKNYHQPALLNVSSLRQVAEGTSISEMWQNDLRPLLIERYPGSPGSFAARQHIMQRIQRLQADWVLEVDTFLSQTPYGYRSFSNIISTLNPTAKRHLVLACHYDSKYFPHWDDRVFVGATDSAVPCAMMLELARALDKQLFSLKNISDSRPDLSLQLIFFDGEEAFHLWSPQDSLYGSRHLASKMASTPHPPGARDTNQLHGMDLLVLLDLIGAPFPTFPNFFPNTARWFGRLEAIEHGLRELGLLKDHSSERWYFRNYGYGGVIQDDHIPFLRRGVPVLHLISSPFPEVWHTMDDNEENLDRTTIDNLNKILQVFVLEYLHL.

The signal sequence occupies residues 1-28 (MAGCRDPRVVDTLHLLLLVAVLPLAVSG). Asn-49 is a glycosylation site (N-linked (GlcNAc...) asparagine). An intrachain disulfide couples Cys-139 to Cys-164. Residue Asp-159 coordinates Zn(2+). Asn-183 is a glycosylation site (N-linked (GlcNAc...) asparagine). The Proton acceptor role is filled by Glu-201. Glu-202 contributes to the Zn(2+) binding site. Asp-248 (proton acceptor) is an active-site residue. His-330 is a Zn(2+) binding site.

It belongs to the glutaminyl-peptide cyclotransferase family. As to expression, expressed mainly in brain tissue.

It localises to the secreted. The enzyme catalyses N-terminal L-glutaminyl-[peptide] = N-terminal 5-oxo-L-prolyl-[peptide] + NH4(+). Its function is as follows. Responsible for the biosynthesis of pyroglutamyl peptides. Has a bias against acidic and tryptophan residues adjacent to the N-terminal glutaminyl residue and a lack of importance of chain length after the second residue. Also catalyzes N-terminal pyroglutamate formation. This is Glutaminyl-peptide cyclotransferase (QPCT) from Bos taurus (Bovine).